Consider the following 314-residue polypeptide: Lipoyl synthase (314 aa).

Residues cysteine 55, cysteine 60, cysteine 66, cysteine 81, cysteine 85, cysteine 88, and serine 292 each coordinate [4Fe-4S] cluster. The region spanning 67 to 281 (WEDREATFLI…SAYAEGLGFA (215 aa)) is the Radical SAM core domain.

It belongs to the radical SAM superfamily. Lipoyl synthase family. The cofactor is [4Fe-4S] cluster.

The protein localises to the cytoplasm. It catalyses the reaction [[Fe-S] cluster scaffold protein carrying a second [4Fe-4S](2+) cluster] + N(6)-octanoyl-L-lysyl-[protein] + 2 oxidized [2Fe-2S]-[ferredoxin] + 2 S-adenosyl-L-methionine + 4 H(+) = [[Fe-S] cluster scaffold protein] + N(6)-[(R)-dihydrolipoyl]-L-lysyl-[protein] + 4 Fe(3+) + 2 hydrogen sulfide + 2 5'-deoxyadenosine + 2 L-methionine + 2 reduced [2Fe-2S]-[ferredoxin]. Its pathway is protein modification; protein lipoylation via endogenous pathway; protein N(6)-(lipoyl)lysine from octanoyl-[acyl-carrier-protein]: step 2/2. Catalyzes the radical-mediated insertion of two sulfur atoms into the C-6 and C-8 positions of the octanoyl moiety bound to the lipoyl domains of lipoate-dependent enzymes, thereby converting the octanoylated domains into lipoylated derivatives. This Mycolicibacterium smegmatis (strain ATCC 700084 / mc(2)155) (Mycobacterium smegmatis) protein is Lipoyl synthase.